We begin with the raw amino-acid sequence, 270 residues long: Tryptophan 2,3-dioxygenase-like protein (270 aa).

Belongs to the tryptophan 2,3-dioxygenase family.

The chain is Tryptophan 2,3-dioxygenase-like protein from Xanthomonas campestris pv. campestris (strain 8004).